We begin with the raw amino-acid sequence, 419 residues long: Ras association domain-containing protein 8 (419 aa).

The region spanning 1-82 (MELKVWVDGV…VQLILRRTGP (82 aa)) is the Ras-associating domain. 2 positions are modified to phosphoserine: Ser-105 and Ser-129. Thr-131 carries the phosphothreonine modification. Residues 372–399 (ASQADIETEAPFQSGSLKRPGSSRQLPS) form a disordered region. Residues 382 to 399 (PFQSGSLKRPGSSRQLPS) are compositionally biased toward polar residues. Residue Ser-387 is modified to Phosphoserine.

The polypeptide is Ras association domain-containing protein 8 (Rassf8) (Mus musculus (Mouse)).